Here is a 334-residue protein sequence, read N- to C-terminus: uncharacterized protein (334 aa).

The next 2 membrane-spanning stretches (helical) occupy residues 19-39 and 55-75; these read AFLRVIGLCGLFSVIAISFGI and LIVLGSVVLFLAFVIHFAALF. A disordered region spans residues 308 to 334; it reads KPESKSSSQKSVETEIEKEVKDKLAKN. Residues 319 to 334 show a composition bias toward basic and acidic residues; that stretch reads VETEIEKEVKDKLAKN.

Its subcellular location is the cell membrane. This is an uncharacterized protein from Mycoplasma genitalium (strain ATCC 33530 / DSM 19775 / NCTC 10195 / G37) (Mycoplasmoides genitalium).